Reading from the N-terminus, the 500-residue chain is L-arabinose isomerase (500 aa).

Glu306, Glu333, His349, and His448 together coordinate Mn(2+).

It belongs to the arabinose isomerase family. The cofactor is Mn(2+).

The catalysed reaction is beta-L-arabinopyranose = L-ribulose. It functions in the pathway carbohydrate degradation; L-arabinose degradation via L-ribulose; D-xylulose 5-phosphate from L-arabinose (bacterial route): step 1/3. Its function is as follows. Catalyzes the conversion of L-arabinose to L-ribulose. This Shewanella sp. (strain ANA-3) protein is L-arabinose isomerase.